Here is a 424-residue protein sequence, read N- to C-terminus: Tyrosine--tRNA ligase (424 aa).

Y37 serves as a coordination point for L-tyrosine. The 'HIGH' region motif lies at 42-51; the sequence is PTADSLHLGH. 2 residues coordinate L-tyrosine: Y175 and Q179. The 'KMSKS' region motif lies at 235–239; sequence KFGKT. K238 lines the ATP pocket. Positions 357–414 constitute an S4 RNA-binding domain; sequence ADLQQALVNAELVPSRGQARTMIGSNAVAINGEKQADPEYVFTDADRLFGRYTLLRRG.

It belongs to the class-I aminoacyl-tRNA synthetase family. TyrS type 1 subfamily. As to quaternary structure, homodimer.

It localises to the cytoplasm. The enzyme catalyses tRNA(Tyr) + L-tyrosine + ATP = L-tyrosyl-tRNA(Tyr) + AMP + diphosphate + H(+). Its function is as follows. Catalyzes the attachment of tyrosine to tRNA(Tyr) in a two-step reaction: tyrosine is first activated by ATP to form Tyr-AMP and then transferred to the acceptor end of tRNA(Tyr). The protein is Tyrosine--tRNA ligase of Yersinia pestis bv. Antiqua (strain Antiqua).